The sequence spans 323 residues: UDP-N-acetylenolpyruvoylglucosamine reductase (323 aa).

An FAD-binding PCMH-type domain is found at 52 to 217; sequence KSGGAADWLF…VSARLQGEPG (166 aa). Residue Arg-197 is part of the active site. The segment at 234–253 is disordered; that stretch reads EQSQPVRTKTGGSTFKNPPG. The segment covering 235 to 249 has biased composition (polar residues); sequence QSQPVRTKTGGSTFK. Catalysis depends on Ser-246, which acts as the Proton donor. Glu-316 is an active-site residue.

The protein belongs to the MurB family. FAD is required as a cofactor.

It is found in the cytoplasm. The catalysed reaction is UDP-N-acetyl-alpha-D-muramate + NADP(+) = UDP-N-acetyl-3-O-(1-carboxyvinyl)-alpha-D-glucosamine + NADPH + H(+). Its pathway is cell wall biogenesis; peptidoglycan biosynthesis. In terms of biological role, cell wall formation. This chain is UDP-N-acetylenolpyruvoylglucosamine reductase, found in Erythrobacter litoralis (strain HTCC2594).